The sequence spans 322 residues: Mas-related G-protein coupled receptor member X3 (322 aa).

Topologically, residues 1-31 (MDSTIPVLGTELTPINGREETPCYKQTLSFT) are extracellular. Residues 32-52 (GLTCIVSLVALTGNAVVLWLL) form a helical membrane-spanning segment. The Cytoplasmic portion of the chain corresponds to 53–60 (GCRMRRNA). Residues 61–81 (VSIYILNLVAADFLFLSGHII) form a helical membrane-spanning segment. At 82–96 (CSPLRLINIRHPISK) the chain is on the extracellular side. Residues 97 to 117 (ILSPVMTFPYFIGLSMLSAIS) form a helical membrane-spanning segment. At 118 to 140 (TERCLSILWPIWYHCRRPRYLSS) the chain is on the cytoplasmic side. A helical transmembrane segment spans residues 141-161 (VMCVLLWALSLLRSILEWMFC). The Extracellular segment spans residues 162-177 (DFLFSGANSVWCETSD). A helical membrane pass occupies residues 178-198 (FITIAWLVFLCVVLCGSSLVL). Residues 199-213 (LVRILCGSRKMPLTR) are Cytoplasmic-facing. A helical transmembrane segment spans residues 214–234 (LYVTILLTVLVFLLCGLPFGI). Topologically, residues 235–254 (QWALFSRIHLDWKVLFCHVH) are extracellular. Residues 255 to 275 (LVSIFLSALNSSANPIIYFFV) form a helical membrane-spanning segment. Topologically, residues 276 to 322 (GSFRQRQNRQNLKLVLQRALQDTPEVDEGGGWLPQETLELSGSRLEQ) are cytoplasmic.

This sequence belongs to the G-protein coupled receptor 1 family. Mas subfamily. As to expression, uniquely localized in a subset of small dorsal root and trigeminal sensory neurons.

It is found in the cell membrane. Functionally, orphan receptor. Probably involved in the function of nociceptive neurons. May regulate nociceptor function and/or development, including the sensation or modulation of pain. Potently activated by enkephalins. The chain is Mas-related G-protein coupled receptor member X3 (MRGPRX3) from Homo sapiens (Human).